Reading from the N-terminus, the 1017-residue chain is Type VI secretion system spike protein VgrG3 (1017 aa).

Aspartate 842 is a catalytic residue.

This sequence belongs to the VgrG protein family. Interacts with TsiV3. Interacts with TseL.

It is found in the secreted. Part of the type VI secretion system specialized secretion system, which delivers several virulence factors in both prokaryotic and eukaryotic cells during infection. Forms the spike at the tip of the elongating tube formed by haemolysin co-regulated protein Hcp. Allows the delivery of the TseL antibacterial toxin to target cells where it exerts its toxicity. Additionally, acts directly as an effector and targets the cell wall peptidoglycan layer of prey cells for degradation via its C-terminus. Toxicity is counteracted by a cognate immunity protein TsiV3. The polypeptide is Type VI secretion system spike protein VgrG3 (Vibrio cholerae serotype O1 (strain ATCC 39315 / El Tor Inaba N16961)).